Consider the following 199-residue polypeptide: Hematopoietic prostaglandin D synthase (199 aa).

A GST N-terminal domain is found at 2–79 (PNYKLTYFNL…YLARESGLAG (78 aa)). Glutathione-binding positions include Tyr8, Arg14, Trp39, 49 to 51 (GKV), and 63 to 64 (QS). In terms of domain architecture, GST C-terminal spans 81-199 (TPVEQALADA…WIQKRPKTAI (119 aa)).

This sequence belongs to the GST superfamily. Sigma family. It depends on glutathione as a cofactor. In terms of tissue distribution, highly expressed in liver, kidney, small intestine and colon, moderately in pancreas, bone marrow, lung and ovary, and expressed at low levels in spleen, thymus, heart and brain. Not detected in oviduct or skin (at protein level). Expressed in liver.

The protein localises to the cytoplasm. The catalysed reaction is prostaglandin H2 = prostaglandin D2. It catalyses the reaction RX + glutathione = an S-substituted glutathione + a halide anion + H(+). It carries out the reaction 2-glyceryl-prostaglandin H2 = 2-glyceryl-prostaglandin D2. Bifunctional enzyme which catalyzes both the conversion of PGH2 to PGD2, a prostaglandin involved in smooth muscle contraction/relaxation and a potent inhibitor of platelet aggregation, and the conjugation of glutathione with a wide range of aryl halides, organic isothiocyanates and alpha,beta-unsaturated carbonyls. Also exhibits low glutathione-peroxidase activity towards cumene hydroperoxide and t-butyl hydroperoxide. This chain is Hematopoietic prostaglandin D synthase (HPGDS), found in Gallus gallus (Chicken).